The primary structure comprises 396 residues: Enoyl-[acyl-carrier-protein] reductase [NADH] (396 aa).

Residues 47-52 (GASTGF), 73-74 (FE), 110-111 (DA), and 138-139 (LA) contribute to the NAD(+) site. A substrate-binding site is contributed by Tyr224. Tyr234 serves as the catalytic Proton donor. NAD(+) contacts are provided by residues Lys243 and 272 to 274 (LVT).

The protein belongs to the TER reductase family. Monomer.

It catalyses the reaction a 2,3-saturated acyl-[ACP] + NAD(+) = a (2E)-enoyl-[ACP] + NADH + H(+). It functions in the pathway lipid metabolism; fatty acid biosynthesis. Functionally, involved in the final reduction of the elongation cycle of fatty acid synthesis (FAS II). Catalyzes the reduction of a carbon-carbon double bond in an enoyl moiety that is covalently linked to an acyl carrier protein (ACP). The sequence is that of Enoyl-[acyl-carrier-protein] reductase [NADH] from Cytophaga hutchinsonii (strain ATCC 33406 / DSM 1761 / CIP 103989 / NBRC 15051 / NCIMB 9469 / D465).